Consider the following 653-residue polypeptide: DNA-directed RNA polymerase III subunit RPC-3 (653 aa).

3 disordered regions span residues 141–186 (INGV…DSDP), 280–309 (DSSA…DFSD), and 422–442 (IKED…KRRG). Positions 159–170 (AENHTDHAHDYQ) are enriched in basic and acidic residues. Acidic residues-rich tracts occupy residues 293 to 309 (PLED…DFSD) and 424 to 433 (EDEDDEDEEG). The leucine-zipper stretch occupies residues 580-601 (TYKSMSRCLQRIRVEREKLKFL).

It belongs to the RNA polymerase beta chain family. Component of the RNA polymerase III (Pol III) complex consisting of 17 subunits.

It localises to the nucleus. Its function is as follows. DNA-dependent RNA polymerase catalyzes the transcription of DNA into RNA using the four ribonucleoside triphosphates as substrates. Specific core component of RNA polymerase III which synthesizes small RNAs, such as 5S rRNA and tRNAs. The polypeptide is DNA-directed RNA polymerase III subunit RPC-3 (RPC-82) (Coccidioides immitis (strain RS) (Valley fever fungus)).